Here is a 352-residue protein sequence, read N- to C-terminus: Replication factor C subunit 5 (352 aa).

It belongs to the activator 1 small subunits family. Heteropentamer of subunits rfc1, rfc2, rfc3, rfc4 and rfc5 that forms a complex with PCNA in the presence of ATP.

Its subcellular location is the nucleus. In terms of biological role, the elongation of primed DNA templates by DNA polymerase delta and epsilon requires the action of the accessory proteins proliferating cell nuclear antigen (PCNA) and activator 1. The chain is Replication factor C subunit 5 from Neurospora crassa (strain ATCC 24698 / 74-OR23-1A / CBS 708.71 / DSM 1257 / FGSC 987).